The primary structure comprises 1338 residues: ABC-type transporter kk1G (1338 aa).

Residues M1–H21 form a disordered region. The span at S11–H21 shows a compositional bias: basic and acidic residues. 6 helical membrane-spanning segments follow: residues Y75 to M95, L130 to I150, H203 to V223, L230 to F250, T312 to I332, and I340 to I360. In terms of domain architecture, ABC transmembrane type-1 1 spans L80–K372. Residues I405–H706 form the ABC transporter 1 domain. Residue G440 to S447 coordinates ATP. Disordered regions lie at residues E473–G518 and E715–R747. 6 helical membrane passes run V777–A797, F816–G836, M895–W917, L919–L941, I1003–G1023, and F1037–F1057. The 287-residue stretch at V777 to Q1063 folds into the ABC transmembrane type-1 2 domain. Residues I1096–A1333 form the ABC transporter 2 domain. G1130–S1137 provides a ligand contact to ATP.

This sequence belongs to the ABC transporter superfamily. ABCB family. Multidrug resistance exporter (TC 3.A.1.201) subfamily.

Its subcellular location is the cell membrane. The protein operates within secondary metabolite biosynthesis. ABC transporter; part of the gene cluster that mediates the biosynthesis of KK-1, a novel cyclic depsipeptide with 10 residues which is a promising active compound with high activity against many plant pathogens, especially Botrytis cinerea. Is probably directly involved in the secretion of KK-1 and thus confers self-tolerance against KK-1. In Curvularia clavata, this protein is ABC-type transporter kk1G.